A 160-amino-acid polypeptide reads, in one-letter code: Fluoride-specific ion channel FluC (160 aa).

4 helical membrane passes run 5 to 25 (LFIS…GLLF), 34 to 54 (FGTL…LGLF), 67 to 87 (FLIT…SEVV), and 99 to 119 (FCVL…GIWI). Residues Gly-74 and Thr-77 each coordinate Na(+).

Belongs to the fluoride channel Fluc/FEX (TC 1.A.43) family.

It localises to the cell inner membrane. It carries out the reaction fluoride(in) = fluoride(out). Its activity is regulated as follows. Na(+) is not transported, but it plays an essential structural role and its presence is essential for fluoride channel function. Fluoride-specific ion channel. Important for reducing fluoride concentration in the cell, thus reducing its toxicity. The sequence is that of Fluoride-specific ion channel FluC from Haemophilus influenzae (strain ATCC 51907 / DSM 11121 / KW20 / Rd).